Here is a 297-residue protein sequence, read N- to C-terminus: Large ribosomal subunit protein uL18 (297 aa).

Lysine 164 participates in a covalent cross-link: Glycyl lysine isopeptide (Lys-Gly) (interchain with G-Cter in ubiquitin). Residues serine 167, serine 176, and serine 235 each carry the phosphoserine modification.

It belongs to the universal ribosomal protein uL18 family. As to quaternary structure, component of the large ribosomal subunit (LSU). Mature yeast ribosomes consist of a small (40S) and a large (60S) subunit. The 40S small subunit contains 1 molecule of ribosomal RNA (18S rRNA) and 33 different proteins (encoded by 57 genes). The large 60S subunit contains 3 rRNA molecules (25S, 5.8S and 5S rRNA) and 46 different proteins (encoded by 81 genes). Component of a hexameric 5S RNP precursor complex, composed of 5S RNA, RRS1, RPF2, RPL5, RPL11A/RPL11B and SYO1; this complex acts as a precursor for ribosome assembly. RPL5/uL18 forms a heterotrimeric complex with SYO1 and RPL11A/RPL11B/uL5. Interaction of this complex with KAP104 allows the nuclear import of the heterotrimer.

It is found in the cytoplasm. The protein resides in the nucleus. Functionally, component of the ribosome, a large ribonucleoprotein complex responsible for the synthesis of proteins in the cell. The small ribosomal subunit (SSU) binds messenger RNAs (mRNAs) and translates the encoded message by selecting cognate aminoacyl-transfer RNA (tRNA) molecules. The large subunit (LSU) contains the ribosomal catalytic site termed the peptidyl transferase center (PTC), which catalyzes the formation of peptide bonds, thereby polymerizing the amino acids delivered by tRNAs into a polypeptide chain. The nascent polypeptides leave the ribosome through a tunnel in the LSU and interact with protein factors that function in enzymatic processing, targeting, and the membrane insertion of nascent chains at the exit of the ribosomal tunnel. The sequence is that of Large ribosomal subunit protein uL18 from Saccharomyces cerevisiae (strain ATCC 204508 / S288c) (Baker's yeast).